A 142-amino-acid chain; its full sequence is UPF0306 protein Ent638_3591 (142 aa).

The protein belongs to the UPF0306 family.

This is UPF0306 protein Ent638_3591 from Enterobacter sp. (strain 638).